Consider the following 184-residue polypeptide: Uroplakin-2 (184 aa).

Residues 1–25 form the signal peptide; that stretch reads MAPLLPIRTLPLILILLALLSPGAA. Positions 26–84 are excised as a propeptide; sequence DFNISSLSGLLSPALTESLLVALPPCHLTGGNATLMVRRANDSKVVTSSFVVPPCRGRR. N-linked (GlcNAc...) asparagine glycosylation is found at Asn-28, Asn-57, and Asn-66. Over 85–155 the chain is Lumenal; that stretch reads ELVSVVDSGA…IGLGMARTGG (71 aa). Residues 156–176 traverse the membrane as a helical segment; that stretch reads MVVITVLLSVAMFLLVLGFII. The Cytoplasmic portion of the chain corresponds to 177-184; sequence ALALGSRK.

Belongs to the uroplakin-2 family. As to quaternary structure, interacts with uroplakin-1a (UPK1A). In terms of tissue distribution, expressed in ureter.

Its subcellular location is the cell membrane. In terms of biological role, component of the asymmetric unit membrane (AUM); a highly specialized biomembrane elaborated by terminally differentiated urothelial cells. May play an important role in regulating the assembly of the AUM. This chain is Uroplakin-2 (UPK2), found in Homo sapiens (Human).